A 275-amino-acid chain; its full sequence is tRNA (guanine-N(1)-)-methyltransferase (275 aa).

S-adenosyl-L-methionine-binding positions include Gly124 and Ile149–Leu154.

The protein belongs to the RNA methyltransferase TrmD family. Homodimer.

The protein localises to the cytoplasm. It catalyses the reaction guanosine(37) in tRNA + S-adenosyl-L-methionine = N(1)-methylguanosine(37) in tRNA + S-adenosyl-L-homocysteine + H(+). Functionally, specifically methylates guanosine-37 in various tRNAs. The polypeptide is tRNA (guanine-N(1)-)-methyltransferase (Bifidobacterium animalis subsp. lactis (strain AD011)).